Consider the following 856-residue polypeptide: MEQFDGFEYSKRDLLGHGAFAIVYRGRYVDRTDVPVAIKAIAKKNISKSKNLLTKEIKILKELSSLKHENLVGLLKCTETPTHVYLVMEFCNGGDLADYLQQKTTLNEDTIQHFVVQIAHALEAINKKGIVHRDLKPQNILLCNNSRTQNPHFTDIVIKLADFGFARFLNDGVMAATLCGSPMYMAPEVIMSMQYDAKADLWSIGTILFQCLTGKAPFVAQTPPQLKAYYEKTRELRPNIPEWCSPNLRDLLLRLLKRNAKDRISFEDFFNHPFLTSPLLPSPSKRILESARSPLLANRRIITPQSSLPVPKRAGSTKLDSPTPVRRIGESPRVQRRVITPGMPSPVPGAPMQESTDFTFLPPRQESSPVKQVQVHTNVSPSLTTCKPVPVPSQRLTYQKMEERLAAARKTAVPSSSSPTGSAVSAQHQHQHQQQQEPASSPVVQRIERPDQLPRRTTLQDPNAHDIERMTMPNPTFVVCGSSTKPSPNNANRVRRSTITSPADTQDMVAADQMLSNLDPTTTTTTIPKSATTANIQGIPRGARDRSVTSPPQPTIHENEPLDNAKYQQTDVNNSPTAPTEPFIIKNQTTCSTSSTSSSVVEEEEAMSLPFASGSHLAAGFKKTPAEVPMDHGALPPALDQEIVLGEEHKQILAKLRFVAELVDTLIHVAEQKDNPLASAMASRRQLLTTGTSTTNTSSPYRRAEQLVVYVRALHMLSSALLLAQTNVANRVLHPSVAVQQVLNQLNDKYHQCLVRSQELASLGLPGQDPAMAVISAERIMYRHAIELCQAAALDELFGNPQLCSQRYQTAYMMLHTLAEQVNCDQDKTVLTRYKVAVEKRLRILERQGFVAAVNT.

A Protein kinase domain is found at 9–275 (YSKRDLLGHG…FEDFFNHPFL (267 aa)). ATP is bound by residues 15–23 (LGHGAFAIV) and K39. Residue D134 is the Proton acceptor of the active site. The segment at 304–327 (PQSSLPVPKRAGSTKLDSPTPVRR) is disordered. The LIR signature appears at 358–361 (FTFL). Disordered regions lie at residues 362–391 (PPRQESSPVKQVQVHTNVSPSLTTCKPVPV), 405–471 (LAAA…ERMT), and 520–582 (PTTT…PTEP). Positions 365-385 (QESSPVKQVQVHTNVSPSLTT) are enriched in polar residues. Positions 411-436 (TAVPSSSSPTGSAVSAQHQHQHQQQQ) are enriched in low complexity. Polar residues-rich tracts occupy residues 527–536 (IPKSATTANI) and 566–578 (KYQQTDVNNSPTA). Residues 750–856 (YHQCLVRSQE…RQGFVAAVNT (107 aa)) form a required for interaction with unc-14 and vab-8 region.

It belongs to the protein kinase superfamily. Ser/Thr protein kinase family. APG1/unc-51/ULK1 subfamily. As to quaternary structure, interacts with unc-14 and vab-8. Interacts (via C-terminus) with atg-13. Interacts (via the LIR motif) with lgg-1; the interaction is direct. Mg(2+) is required as a cofactor.

The catalysed reaction is L-seryl-[protein] + ATP = O-phospho-L-seryl-[protein] + ADP + H(+). It carries out the reaction L-threonyl-[protein] + ATP = O-phospho-L-threonyl-[protein] + ADP + H(+). Protein kinase important for axonal elongation and axonal guidance. Functions in the CAN axons to direct both anterior and posterior migrations. Phosphorylates both unc-14 and vab-8. Component of the unc-51/atg-13 complex that is probably recruited by lgg-1 to preautophagosomes and is required for autophagosome formation. Interaction with autophagy related proteins such as atg-13 links it to the autophagy machinery to in turn promote P-granule degradation in somatic cells. Plays a role in mitophagy during limited food availability. Regulates cell size. Plays a role in male tail ray pattern formation. May be required for normal dauer morphogenesis. This is Serine/threonine-protein kinase unc-51 from Caenorhabditis elegans.